A 208-amino-acid chain; its full sequence is Protein GrpE (208 aa).

A compositionally biased stretch (basic and acidic residues) spans 1–12; that stretch reads MTNKDESVEKNT. The disordered stretch occupies residues 1–51; the sequence is MTNKDESVEKNTESTVEETNVKQNIDDSVEQAEESKGHLQDEAIEETSDEN. The span at 13 to 23 shows a compositional bias: polar residues; that stretch reads ESTVEETNVKQ. Residues 42–51 show a composition bias toward acidic residues; that stretch reads EAIEETSDEN.

This sequence belongs to the GrpE family. In terms of assembly, homodimer.

The protein resides in the cytoplasm. Its function is as follows. Participates actively in the response to hyperosmotic and heat shock by preventing the aggregation of stress-denatured proteins, in association with DnaK and GrpE. It is the nucleotide exchange factor for DnaK and may function as a thermosensor. Unfolded proteins bind initially to DnaJ; upon interaction with the DnaJ-bound protein, DnaK hydrolyzes its bound ATP, resulting in the formation of a stable complex. GrpE releases ADP from DnaK; ATP binding to DnaK triggers the release of the substrate protein, thus completing the reaction cycle. Several rounds of ATP-dependent interactions between DnaJ, DnaK and GrpE are required for fully efficient folding. This is Protein GrpE from Staphylococcus aureus (strain USA300).